The primary structure comprises 328 residues: NADH-quinone oxidoreductase subunit H 2 (328 aa).

8 helical membrane passes run 3-23 (LIVA…ILLL), 77-97 (FLFK…FAAI), 119-139 (VALL…IFGG), 165-185 (MGFA…LDIV), 191-211 (VWNV…GLAE), 250-270 (MVLV…GVLI), 272-292 (LPPL…FMWF), and 307-327 (IGWK…GVVF).

It belongs to the complex I subunit 1 family. In terms of assembly, NDH-1 is composed of 14 different subunits. Subunits NuoA, H, J, K, L, M, N constitute the membrane sector of the complex.

It localises to the cell inner membrane. The enzyme catalyses a quinone + NADH + 5 H(+)(in) = a quinol + NAD(+) + 4 H(+)(out). In terms of biological role, NDH-1 shuttles electrons from NADH, via FMN and iron-sulfur (Fe-S) centers, to quinones in the respiratory chain. The immediate electron acceptor for the enzyme in this species is believed to be ubiquinone. Couples the redox reaction to proton translocation (for every two electrons transferred, four hydrogen ions are translocated across the cytoplasmic membrane), and thus conserves the redox energy in a proton gradient. This subunit may bind ubiquinone. The chain is NADH-quinone oxidoreductase subunit H 2 from Rhizobium meliloti (strain 1021) (Ensifer meliloti).